We begin with the raw amino-acid sequence, 500 residues long: AMP phosphorylase (500 aa).

AMP-binding positions include glycine 166, 192–197 (SRAVTS), and threonine 201. Catalysis depends on aspartate 254, which acts as the Proton donor. Residues serine 262 and lysine 286 each contribute to the AMP site.

The protein belongs to the thymidine/pyrimidine-nucleoside phosphorylase family. Type 2 subfamily.

The enzyme catalyses AMP + phosphate = alpha-D-ribose 1,5-bisphosphate + adenine. It carries out the reaction CMP + phosphate = cytosine + alpha-D-ribose 1,5-bisphosphate. The catalysed reaction is UMP + phosphate = alpha-D-ribose 1,5-bisphosphate + uracil. Its function is as follows. Catalyzes the conversion of AMP and phosphate to adenine and ribose 1,5-bisphosphate (R15P). Exhibits phosphorylase activity toward CMP and UMP in addition to AMP. Functions in an archaeal AMP degradation pathway, together with R15P isomerase and RubisCO. In Natronomonas pharaonis (strain ATCC 35678 / DSM 2160 / CIP 103997 / JCM 8858 / NBRC 14720 / NCIMB 2260 / Gabara) (Halobacterium pharaonis), this protein is AMP phosphorylase (deoA).